The following is a 93-amino-acid chain: Insertion element ISR1 uncharacterized 11 kDa protein A1 (93 aa).

2 disordered regions span residues 14–33 (RRAR…QERR) and 68–93 (RRRA…SAGR).

The protein is Insertion element ISR1 uncharacterized 11 kDa protein A1 of Rhizobium sp.